The sequence spans 242 residues: UDP-2,3-diacylglucosamine hydrolase (242 aa).

Mn(2+) is bound by residues Asp8, His10, Asp41, Asn79, and His114. Asn79 to Arg80 contributes to the substrate binding site. Substrate-binding residues include Asp122, Lys164, Lys167, and His195. Mn(2+)-binding residues include His195 and His197.

It belongs to the LpxH family. Mn(2+) serves as cofactor.

Its subcellular location is the cell inner membrane. It catalyses the reaction UDP-2-N,3-O-bis[(3R)-3-hydroxytetradecanoyl]-alpha-D-glucosamine + H2O = 2-N,3-O-bis[(3R)-3-hydroxytetradecanoyl]-alpha-D-glucosaminyl 1-phosphate + UMP + 2 H(+). It participates in glycolipid biosynthesis; lipid IV(A) biosynthesis; lipid IV(A) from (3R)-3-hydroxytetradecanoyl-[acyl-carrier-protein] and UDP-N-acetyl-alpha-D-glucosamine: step 4/6. Functionally, hydrolyzes the pyrophosphate bond of UDP-2,3-diacylglucosamine to yield 2,3-diacylglucosamine 1-phosphate (lipid X) and UMP by catalyzing the attack of water at the alpha-P atom. Involved in the biosynthesis of lipid A, a phosphorylated glycolipid that anchors the lipopolysaccharide to the outer membrane of the cell. In Vibrio parahaemolyticus serotype O3:K6 (strain RIMD 2210633), this protein is UDP-2,3-diacylglucosamine hydrolase.